Reading from the N-terminus, the 142-residue chain is Low molecular weight protein-tyrosine-phosphatase Ptp (142 aa).

Cys10 (nucleophile) is an active-site residue. Residue Arg16 is part of the active site. Asp115 serves as the catalytic Proton donor.

Belongs to the low molecular weight phosphotyrosine protein phosphatase family.

The enzyme catalyses O-phospho-L-tyrosyl-[protein] + H2O = L-tyrosyl-[protein] + phosphate. It participates in glycan metabolism; exopolysaccharide biosynthesis. With respect to regulation, inhibited by ammonium molybdate, sodium orthovanadate, N-ethylmaleimide and iodoacetic acid. Dephosphorylates ptk. May be involved in the production and the transport of exopolysaccharides. In Acinetobacter johnsonii, this protein is Low molecular weight protein-tyrosine-phosphatase Ptp (ptp).